Reading from the N-terminus, the 228-residue chain is Immunogenic protein MPB64 (228 aa).

An N-terminal signal peptide occupies residues 1 to 23 (MRIKIFMLVTAVVLLCCSGVATA).

This sequence belongs to the RsiV family.

The protein resides in the secreted. This chain is Immunogenic protein MPB64 (mpb64), found in Mycobacterium bovis (strain ATCC BAA-935 / AF2122/97).